Reading from the N-terminus, the 55-residue chain is Large ribosomal subunit protein bL33 (55 aa).

Over residues 1-11 the composition is skewed to basic and acidic residues; sequence MAKGARDKIKL. The disordered stretch occupies residues 1–24; the sequence is MAKGARDKIKLESTAGTGHFYTTT. A compositionally biased stretch (polar residues) spans 14–24; it reads TAGTGHFYTTT.

Belongs to the bacterial ribosomal protein bL33 family.

This chain is Large ribosomal subunit protein bL33, found in Burkholderia multivorans (strain ATCC 17616 / 249).